A 253-amino-acid chain; its full sequence is Putative cysteine-rich repeat secretory protein 33 (253 aa).

The N-terminal stretch at Met-1–Ser-28 is a signal peptide. 2 Gnk2-homologous domains span residues Glu-34 to Asp-133 and Tyr-141 to Phe-250.

Belongs to the cysteine-rich repeat secretory protein family.

It is found in the secreted. The polypeptide is Putative cysteine-rich repeat secretory protein 33 (CRRSP33) (Arabidopsis thaliana (Mouse-ear cress)).